We begin with the raw amino-acid sequence, 481 residues long: MTFRFDNSYARDLEGFYVDWPAAPVPAPRLLRLNRPLAEELGLDPDLLEREGAEIFSGRRLPEGAHPLAQAYAGHQFGGFSPQLGDGRALLIGEITDRAGRRRDLQLKGSGRTPFSRGADGKAALGPVLREYLVGEAMHGLGIPTTRALAAVATGEPLLRQEGERPGAILTRVAASHIRVGTFQFFAARSDIERVRRLADYAIARHYPELASAPEPYLAFYEAVAEAQAQLVARWMLVGFIHGVMNTDNMTISGETIDYGPCAFMEGYDPGTVFSSIDLQGRYAYGNQPFILAWNLARLGEALLPLLDADAERAADKANSVLETVGARYQGHWLAGMRAKLGLSGAEEGDARLAEDLLEAMRSQRADWTLTFRRLADAVTDEGALRPLFRDGSALEAWLPRWRDRLAPDAAQRMRATNPIYIARNHRVEEALAAAHAGDLAPFDRLLEALAEPFTERADRELFALPAPEGFDDSYRTFCGT.

Residues Gly85, Gly87, Arg88, Lys108, Asp120, Gly121, Arg172, and Arg179 each coordinate ATP. Asp248 acts as the Proton acceptor in catalysis. Mg(2+) contacts are provided by Asn249 and Asp258. Asp258 contacts ATP.

This sequence belongs to the SELO family. It depends on Mg(2+) as a cofactor. Requires Mn(2+) as cofactor.

The enzyme catalyses L-seryl-[protein] + ATP = 3-O-(5'-adenylyl)-L-seryl-[protein] + diphosphate. It catalyses the reaction L-threonyl-[protein] + ATP = 3-O-(5'-adenylyl)-L-threonyl-[protein] + diphosphate. The catalysed reaction is L-tyrosyl-[protein] + ATP = O-(5'-adenylyl)-L-tyrosyl-[protein] + diphosphate. It carries out the reaction L-histidyl-[protein] + UTP = N(tele)-(5'-uridylyl)-L-histidyl-[protein] + diphosphate. The enzyme catalyses L-seryl-[protein] + UTP = O-(5'-uridylyl)-L-seryl-[protein] + diphosphate. It catalyses the reaction L-tyrosyl-[protein] + UTP = O-(5'-uridylyl)-L-tyrosyl-[protein] + diphosphate. In terms of biological role, nucleotidyltransferase involved in the post-translational modification of proteins. It can catalyze the addition of adenosine monophosphate (AMP) or uridine monophosphate (UMP) to a protein, resulting in modifications known as AMPylation and UMPylation. The polypeptide is Protein nucleotidyltransferase YdiU (Cereibacter sphaeroides (strain ATCC 17029 / ATH 2.4.9) (Rhodobacter sphaeroides)).